The sequence spans 349 residues: Aspartate-semialdehyde dehydrogenase (349 aa).

NADP(+) contacts are provided by residues 12–15 (TGSV) and 39–40 (NS). Phosphate is bound at residue R113. The Acyl-thioester intermediate role is filled by C148. A substrate-binding site is contributed by Q175. 178 to 179 (SG) is a binding site for NADP(+). E201 contributes to the substrate binding site. K204 contributes to the phosphate binding site. Residue R234 participates in substrate binding. The Proton acceptor role is filled by H241. 326–327 (NT) serves as a coordination point for NADP(+).

Belongs to the aspartate-semialdehyde dehydrogenase family. In terms of assembly, homodimer.

It carries out the reaction L-aspartate 4-semialdehyde + phosphate + NADP(+) = 4-phospho-L-aspartate + NADPH + H(+). The protein operates within amino-acid biosynthesis; L-lysine biosynthesis via DAP pathway; (S)-tetrahydrodipicolinate from L-aspartate: step 2/4. It participates in amino-acid biosynthesis; L-methionine biosynthesis via de novo pathway; L-homoserine from L-aspartate: step 2/3. It functions in the pathway amino-acid biosynthesis; L-threonine biosynthesis; L-threonine from L-aspartate: step 2/5. Catalyzes the NADPH-dependent formation of L-aspartate-semialdehyde (L-ASA) by the reductive dephosphorylation of L-aspartyl-4-phosphate. The polypeptide is Aspartate-semialdehyde dehydrogenase (Leptospira interrogans serogroup Icterohaemorrhagiae serovar Lai (strain 56601)).